Reading from the N-terminus, the 104-residue chain is N(4)-acetylcytidine amidohydrolase (104 aa).

Residues 7 to 93 (MTFFSRFEAD…EVIQEIYPGI (87 aa)) form the ASCH domain. Residue Lys-22 is the Proton acceptor of the active site. Residue Thr-25 is the Nucleophile of the active site. Glu-75 (proton donor) is an active-site residue.

The protein belongs to the N(4)-acetylcytidine amidohydrolase family.

It carries out the reaction N(4)-acetylcytidine + H2O = cytidine + acetate + H(+). It catalyses the reaction N(4)-acetyl-2'-deoxycytidine + H2O = 2'-deoxycytidine + acetate + H(+). The catalysed reaction is N(4)-acetylcytosine + H2O = cytosine + acetate + H(+). In terms of biological role, catalyzes the hydrolysis of N(4)-acetylcytidine (ac4C). The sequence is that of N(4)-acetylcytidine amidohydrolase from Vibrio vulnificus (strain YJ016).